Reading from the N-terminus, the 869-residue chain is Valine--tRNA ligase (869 aa).

The short motif at 47–57 (PYPTGNFHIGN) is the 'HIGH' region element. A 'KMSKS' region motif is present at residues 521 to 525 (KMSKS). Position 524 (lysine 524) interacts with ATP.

Belongs to the class-I aminoacyl-tRNA synthetase family. ValS type 2 subfamily.

The protein localises to the cytoplasm. It carries out the reaction tRNA(Val) + L-valine + ATP = L-valyl-tRNA(Val) + AMP + diphosphate. In terms of biological role, catalyzes the attachment of valine to tRNA(Val). As ValRS can inadvertently accommodate and process structurally similar amino acids such as threonine, to avoid such errors, it has a 'posttransfer' editing activity that hydrolyzes mischarged Thr-tRNA(Val) in a tRNA-dependent manner. The sequence is that of Valine--tRNA ligase from Methanosarcina acetivorans (strain ATCC 35395 / DSM 2834 / JCM 12185 / C2A).